Reading from the N-terminus, the 921-residue chain is MDFKETLLMPKTDFPMRGNLPNREPQMQEEWKDMNIYEKVQARTKGRPLFVLHDGPPYANGDIHMGHALNKVLKDMIVRYKSMAGFHAPYVPGWDTHGLPIEQALTKSGVDRKSMSVAEFRKLCEEFARKQIDRQREQFMRLGVRGDWWNPYVTLDKGFEAQQVKVFGEMAKKGYIYKGKKPVYWSPSSESALAEAEIEYHDKRSPSIYVAFPVKDGKNVLQQDEKIVIWTTTPWTIPANLGIAVHPELEYSVVAVKGEKYVVASGLVETLESALEWENPEILRTIKGVDLEYVVAEHPIYGRDSLVVLGDHVTLDAGTGCVHTAPGHGEEDYIVGQKYGLDVLCPVDDKGYMTAEAPGFEGLFYDEANKPITQKLDECGALLKLTFITHSYAHDWRTKKPVIYRATAQWFASIENFRDELLRAIQEVKWVPEWGETRLYNMVRDRGDWCISRQRVWGVPIPIFYGENGEPIITDETINHVSELFRKHGSNVWFEWETKDLLPEGFTHESSPNGQFTREMDIMDVWFDSGSSHQGVLVEREELDRPADLYLEGSDQYRGWFNSSLSTSVAITGKAPYKGVLSHGFTLDGEGKKMSKSLGNVVIPNDVMKQLGADILRLWVASVDYQADVRVSDKILKQVSEVYRKIRNTYRFLLGNLHDFHPATHRVAIDQLNGLDRYMLAKLNDVINRVKKAYDEYQFSTVYHELHNFCTIELSSFYMDIAKDTLYVKHADHPDRRATQTVMYDVLVALAKLLSPIIPHTADEVWKHIPGVEEESVQLTDMPEPIELGDVSELKQKWDAFINVRDDVLKALENARNEKVIGKSLTAAITLYADGDVRQLLEELGPLDKLFIVSAVKVAGSVADAPKEAESYDDLAIVVEKAVGETCERCWVVSPTVGTNNEHPTLCADCAETVATYYVTK.

The 'HIGH' region signature appears at 57–67; it reads PYANGDIHMGH. Residue E552 participates in L-isoleucyl-5'-AMP binding. Positions 593–597 match the 'KMSKS' region motif; that stretch reads KMSKS. An ATP-binding site is contributed by K596. Zn(2+)-binding residues include C887, C890, C907, and C910.

This sequence belongs to the class-I aminoacyl-tRNA synthetase family. IleS type 1 subfamily. In terms of assembly, monomer. Zn(2+) serves as cofactor.

The protein localises to the cytoplasm. It catalyses the reaction tRNA(Ile) + L-isoleucine + ATP = L-isoleucyl-tRNA(Ile) + AMP + diphosphate. Functionally, catalyzes the attachment of isoleucine to tRNA(Ile). As IleRS can inadvertently accommodate and process structurally similar amino acids such as valine, to avoid such errors it has two additional distinct tRNA(Ile)-dependent editing activities. One activity is designated as 'pretransfer' editing and involves the hydrolysis of activated Val-AMP. The other activity is designated 'posttransfer' editing and involves deacylation of mischarged Val-tRNA(Ile). In Halalkalibacterium halodurans (strain ATCC BAA-125 / DSM 18197 / FERM 7344 / JCM 9153 / C-125) (Bacillus halodurans), this protein is Isoleucine--tRNA ligase.